Here is a 67-residue protein sequence, read N- to C-terminus: VIIIAVLFLTACQLIATASYARSERKHPDLRLSSRNSKLSKRCLGSRELCVRDTSCCSMSCTNNICF.

An N-terminal signal peptide occupies residues 1–17; the sequence is VIIIAVLFLTACQLIAT. A propeptide spanning residues 18-40 is cleaved from the precursor; the sequence is ASYARSERKHPDLRLSSRNSKLS. 3 disulfides stabilise this stretch: Cys43-Cys57, Cys50-Cys61, and Cys56-Cys66.

It belongs to the conotoxin O1 superfamily. As to expression, expressed by the venom duct.

The protein resides in the secreted. The polypeptide is Conotoxin AbVIO (Conus abbreviatus (Abbreviated cone)).